The sequence spans 190 residues: Protein LZIC (190 aa).

A coiled-coil region spans residues 2–63; sequence ASRGKTETSK…SEFNDSLKKI (62 aa).

The protein belongs to the CTNNBIP1 family. As to quaternary structure, does not interact with CTNNB1.

The protein is Protein LZIC (Lzic) of Mus musculus (Mouse).